The chain runs to 123 residues: UPF0102 protein Dole_2298 (123 aa).

The protein belongs to the UPF0102 family.

This is UPF0102 protein Dole_2298 from Desulfosudis oleivorans (strain DSM 6200 / JCM 39069 / Hxd3) (Desulfococcus oleovorans).